The following is a 152-amino-acid chain: MSGKKEVKAPKVVEALSAKIPCGPSELVFGVAHIFASFNDTFVHVTDLSSKETIVRVTGGMKVKTDRDESSPYAATMAAQDVALRCKELGVTALHIKLRATGGNGSKTPGPGAQSALRALARSGMRIGRIEDVTPIPTDSTRRKSGHRGRRL.

Residues 133–152 (VTPIPTDSTRRKSGHRGRRL) are disordered. Positions 143 to 152 (RKSGHRGRRL) are enriched in basic residues.

The protein belongs to the universal ribosomal protein uS11 family. As to quaternary structure, component of the small ribosomal subunit. Part of the small subunit (SSU) processome, composed of more than 70 proteins and the RNA chaperone small nucleolar RNA (snoRNA) U3.

The protein resides in the cytoplasm. Its subcellular location is the nucleus. It is found in the nucleolus. In terms of biological role, component of the small ribosomal subunit. The ribosome is a large ribonucleoprotein complex responsible for the synthesis of proteins in the cell. Part of the small subunit (SSU) processome, first precursor of the small eukaryotic ribosomal subunit. During the assembly of the SSU processome in the nucleolus, many ribosome biogenesis factors, an RNA chaperone and ribosomal proteins associate with the nascent pre-rRNA and work in concert to generate RNA folding, modifications, rearrangements and cleavage as well as targeted degradation of pre-ribosomal RNA by the RNA exosome. This chain is Small ribosomal subunit protein uS11 (rps14), found in Dictyostelium discoideum (Social amoeba).